The sequence spans 340 residues: Ketol-acid reductoisomerase (NADP(+)) (340 aa).

Positions 1–182 (MRVYYDRDCD…GGGRSGIIET (182 aa)) constitute a KARI N-terminal Rossmann domain. NADP(+)-binding positions include 24-27 (YGSQ), arginine 48, serine 51, serine 53, and 83-86 (DELQ). Residue histidine 108 is part of the active site. Glycine 134 lines the NADP(+) pocket. The 147-residue stretch at 183–329 (NFREECETDL…ETLRGMMPWI (147 aa)) folds into the KARI C-terminal knotted domain. Positions 191, 195, 227, and 231 each coordinate Mg(2+). Serine 252 is a binding site for substrate.

It belongs to the ketol-acid reductoisomerase family. It depends on Mg(2+) as a cofactor.

It carries out the reaction (2R)-2,3-dihydroxy-3-methylbutanoate + NADP(+) = (2S)-2-acetolactate + NADPH + H(+). It catalyses the reaction (2R,3R)-2,3-dihydroxy-3-methylpentanoate + NADP(+) = (S)-2-ethyl-2-hydroxy-3-oxobutanoate + NADPH + H(+). Its pathway is amino-acid biosynthesis; L-isoleucine biosynthesis; L-isoleucine from 2-oxobutanoate: step 2/4. It functions in the pathway amino-acid biosynthesis; L-valine biosynthesis; L-valine from pyruvate: step 2/4. Functionally, involved in the biosynthesis of branched-chain amino acids (BCAA). Catalyzes an alkyl-migration followed by a ketol-acid reduction of (S)-2-acetolactate (S2AL) to yield (R)-2,3-dihydroxy-isovalerate. In the isomerase reaction, S2AL is rearranged via a Mg-dependent methyl migration to produce 3-hydroxy-3-methyl-2-ketobutyrate (HMKB). In the reductase reaction, this 2-ketoacid undergoes a metal-dependent reduction by NADPH to yield (R)-2,3-dihydroxy-isovalerate. The protein is Ketol-acid reductoisomerase (NADP(+)) of Jannaschia sp. (strain CCS1).